Consider the following 473-residue polypeptide: Serine carboxypeptidase-like 25 (473 aa).

The signal sequence occupies residues 1–22 (MAMAKLAIFTTLMAILVMTSQG). N46 and N143 each carry an N-linked (GlcNAc...) asparagine glycan. 3 disulfide bridges follow: C92/C358, C252/C263, and C288/C326. The active site involves S185. N-linked (GlcNAc...) asparagine glycans are attached at residues N289, N299, N347, and N367. Residues D395 and H447 contribute to the active site.

Belongs to the peptidase S10 family. In terms of tissue distribution, ubiquitous.

The protein localises to the secreted. Functionally, probable carboxypeptidase. The sequence is that of Serine carboxypeptidase-like 25 (SCPL25) from Arabidopsis thaliana (Mouse-ear cress).